Here is a 211-residue protein sequence, read N- to C-terminus: Uracil phosphoribosyltransferase (211 aa).

5-phospho-alpha-D-ribose 1-diphosphate-binding positions include arginine 78, arginine 103, and 130-138; that span reads DPMLATGGT. Uracil is bound by residues isoleucine 196 and 201–203; that span reads GDA. Aspartate 202 provides a ligand contact to 5-phospho-alpha-D-ribose 1-diphosphate.

Belongs to the UPRTase family. Mg(2+) is required as a cofactor.

The catalysed reaction is UMP + diphosphate = 5-phospho-alpha-D-ribose 1-diphosphate + uracil. It functions in the pathway pyrimidine metabolism; UMP biosynthesis via salvage pathway; UMP from uracil: step 1/1. Its activity is regulated as follows. Allosterically activated by GTP. In terms of biological role, catalyzes the conversion of uracil and 5-phospho-alpha-D-ribose 1-diphosphate (PRPP) to UMP and diphosphate. The chain is Uracil phosphoribosyltransferase from Kineococcus radiotolerans (strain ATCC BAA-149 / DSM 14245 / SRS30216).